The primary structure comprises 82 residues: Small ribosomal subunit protein bS16 (82 aa).

It belongs to the bacterial ribosomal protein bS16 family.

The protein is Small ribosomal subunit protein bS16 of Photorhabdus laumondii subsp. laumondii (strain DSM 15139 / CIP 105565 / TT01) (Photorhabdus luminescens subsp. laumondii).